Here is a 675-residue protein sequence, read N- to C-terminus: Parasporal crystal protein Cry18Ba (675 aa).

It belongs to the delta endotoxin family.

Binds to the brush border membrane vesicles of scarab larvae and damages the gut wall somehow to allow the vegetative cells of P.popilliae to enter the hemolymph. In Paenibacillus popilliae (Bacillus popilliae), this protein is Parasporal crystal protein Cry18Ba (cry18Ba).